The following is a 126-amino-acid chain: Fluoride-specific ion channel FluC (126 aa).

The next 4 membrane-spanning stretches (helical) occupy residues 6 to 26 (VLLVGAGGFAGSVARYLVALA), 32 to 52 (TGFPFATFAVNLLGSFLIGFI), 68 to 90 (LLLTTGFCGGFTTFSTAMYETGG), and 102 to 122 (LYVAGSLAGGLACLFSGTLLA). Residues glycine 76 and threonine 79 each coordinate Na(+).

The protein belongs to the fluoride channel Fluc/FEX (TC 1.A.43) family.

The protein resides in the cell inner membrane. It carries out the reaction fluoride(in) = fluoride(out). Na(+) is not transported, but it plays an essential structural role and its presence is essential for fluoride channel function. Functionally, fluoride-specific ion channel. Important for reducing fluoride concentration in the cell, thus reducing its toxicity. The sequence is that of Fluoride-specific ion channel FluC from Chlorobaculum tepidum (strain ATCC 49652 / DSM 12025 / NBRC 103806 / TLS) (Chlorobium tepidum).